Consider the following 301-residue polypeptide: Ribosomal protein L11 methyltransferase (301 aa).

Positions 147, 168, 190, and 237 each coordinate S-adenosyl-L-methionine.

The protein belongs to the methyltransferase superfamily. PrmA family.

The protein resides in the cytoplasm. The catalysed reaction is L-lysyl-[protein] + 3 S-adenosyl-L-methionine = N(6),N(6),N(6)-trimethyl-L-lysyl-[protein] + 3 S-adenosyl-L-homocysteine + 3 H(+). Methylates ribosomal protein L11. This is Ribosomal protein L11 methyltransferase from Synechococcus sp. (strain RCC307).